Consider the following 318-residue polypeptide: HPr kinase/phosphorylase (318 aa).

Catalysis depends on residues His146 and Lys167. Residue Gly161–Ser168 coordinates ATP. Ser168 contacts Mg(2+). Catalysis depends on Asp185, which acts as the Proton acceptor; for phosphorylation activity. Proton donor; for dephosphorylation activity. Residues Leu209–Asp218 are important for the catalytic mechanism of both phosphorylation and dephosphorylation. Glu210 is a binding site for Mg(2+). Arg252 is a catalytic residue. Residues Gln273–Arg278 form an important for the catalytic mechanism of dephosphorylation region.

The protein belongs to the HPrK/P family. As to quaternary structure, homohexamer. Mg(2+) serves as cofactor.

The enzyme catalyses [HPr protein]-L-serine + ATP = [HPr protein]-O-phospho-L-serine + ADP + H(+). The catalysed reaction is [HPr protein]-O-phospho-L-serine + phosphate + H(+) = [HPr protein]-L-serine + diphosphate. Its function is as follows. Catalyzes the ATP- as well as the pyrophosphate-dependent phosphorylation of a specific serine residue in HPr, a phosphocarrier protein of the phosphoenolpyruvate-dependent sugar phosphotransferase system (PTS). HprK/P also catalyzes the pyrophosphate-producing, inorganic phosphate-dependent dephosphorylation (phosphorolysis) of seryl-phosphorylated HPr (P-Ser-HPr). The protein is HPr kinase/phosphorylase of Verminephrobacter eiseniae (strain EF01-2).